A 149-amino-acid polypeptide reads, in one-letter code: D-aminoacyl-tRNA deacylase (149 aa).

Positions 137–138 (GP) match the Gly-cisPro motif, important for rejection of L-amino acids motif.

It belongs to the DTD family. Homodimer.

It is found in the cytoplasm. It catalyses the reaction glycyl-tRNA(Ala) + H2O = tRNA(Ala) + glycine + H(+). The catalysed reaction is a D-aminoacyl-tRNA + H2O = a tRNA + a D-alpha-amino acid + H(+). Functionally, an aminoacyl-tRNA editing enzyme that deacylates mischarged D-aminoacyl-tRNAs. Also deacylates mischarged glycyl-tRNA(Ala), protecting cells against glycine mischarging by AlaRS. Acts via tRNA-based rather than protein-based catalysis; rejects L-amino acids rather than detecting D-amino acids in the active site. By recycling D-aminoacyl-tRNA to D-amino acids and free tRNA molecules, this enzyme counteracts the toxicity associated with the formation of D-aminoacyl-tRNA entities in vivo and helps enforce protein L-homochirality. This chain is D-aminoacyl-tRNA deacylase, found in Clostridioides difficile (strain 630) (Peptoclostridium difficile).